A 527-amino-acid polypeptide reads, in one-letter code: Mitochondrial substrate carrier family protein V (527 aa).

Positions Met1–Thr14 are enriched in basic and acidic residues. Positions Met1–Thr29 are disordered. The Mitochondrial intermembrane segment spans residues Met1–Asn132. Polar residues predominate over residues Glu15–Thr29. Solcar repeat units follow at residues Lys130–His220, Met253–Ile345, and Val430–Leu519. A helical transmembrane segment spans residues Val133–Phe153. Topologically, residues Glu154–Glu187 are mitochondrial matrix. Residues Gly188–Gly208 traverse the membrane as a helical segment. The Mitochondrial intermembrane portion of the chain corresponds to Ile209–Thr258. Residues Met259–Val279 form a helical membrane-spanning segment. Residues Arg280 to Ser324 are Mitochondrial matrix-facing. Residues Ile325–Ile345 form a helical membrane-spanning segment. Residues Cys346–Asp435 are Mitochondrial intermembrane-facing. The chain crosses the membrane as a helical span at residues Phe436–Leu456. Residues Arg457 to Gly487 are Mitochondrial matrix-facing. The chain crosses the membrane as a helical span at residues Leu488 to Ile508. Residues Ser509–Lys527 lie on the Mitochondrial intermembrane side of the membrane.

Belongs to the mitochondrial carrier (TC 2.A.29) family.

The protein localises to the mitochondrion inner membrane. Its function is as follows. Mitochondrial solute carriers shuttle metabolites, nucleotides, and cofactors through the mitochondrial inner membrane. This chain is Mitochondrial substrate carrier family protein V (mcfV), found in Dictyostelium discoideum (Social amoeba).